We begin with the raw amino-acid sequence, 169 residues long: Protein Flattop homolog (169 aa).

A disordered region spans residues I53 to C169. Residues V119–Q130 show a composition bias toward polar residues.

Belongs to the Flattop family.

Its subcellular location is the cytoplasm. The protein localises to the cytoskeleton. It is found in the cilium basal body. The protein resides in the cell projection. It localises to the cilium. Its subcellular location is the apical cell membrane. In terms of biological role, acts as a regulator of cilium basal body docking and positioning in mono- and multiciliated cells. This is Protein Flattop homolog from Nematostella vectensis (Starlet sea anemone).